The primary structure comprises 708 residues: Otogelin-like protein (708 aa).

Positions K1–V113 constitute a VWFD domain. The N-linked (GlcNAc...) asparagine glycan is linked to N553. Disulfide bonds link C616–C672, C637–C686, C648–C703, and C652–C705. The region spanning C616–N708 is the CTCK domain.

Belongs to the otogelin family.

The protein localises to the secreted. The sequence is that of Otogelin-like protein (OTOGL) from Pongo abelii (Sumatran orangutan).